A 285-amino-acid polypeptide reads, in one-letter code: Pseudouridine-5'-phosphate glycosidase (285 aa).

Residue glutamate 17 is the Proton donor of the active site. Residues lysine 77 and valine 97 each coordinate substrate. Aspartate 126 lines the Mn(2+) pocket. A substrate-binding site is contributed by 128–130 (SQD). The Nucleophile role is filled by lysine 147.

The protein belongs to the pseudouridine-5'-phosphate glycosidase family. Homotrimer. Mn(2+) serves as cofactor.

It catalyses the reaction D-ribose 5-phosphate + uracil = psi-UMP + H2O. Functionally, catalyzes the reversible cleavage of pseudouridine 5'-phosphate (PsiMP) to ribose 5-phosphate and uracil. Functions biologically in the cleavage direction, as part of a pseudouridine degradation pathway. The polypeptide is Pseudouridine-5'-phosphate glycosidase (Thermotoga sp. (strain RQ2)).